Reading from the N-terminus, the 475-residue chain is Ras-GEF domain-containing family member 1A (475 aa).

In terms of domain architecture, N-terminal Ras-GEF spans 33–164 (QDGSLVSGSL…SISQMTQNVL (132 aa)). Residues 208-455 (DPLILAQQLT…FLASFENEGP (248 aa)) form the Ras-GEF domain.

In terms of biological role, guanine nucleotide exchange factor (GEF) with specificity for rap2a and other Ras family proteins (in vitro). Plays a role in cell migration. The protein is Ras-GEF domain-containing family member 1A (rasgef1a) of Xenopus tropicalis (Western clawed frog).